We begin with the raw amino-acid sequence, 697 residues long: MSSKHSDPLERFYKQFQAFVQNNPNVISAARAAAQIPESAKAVVVLSPYSLQHVFPREWVTKSYRKTIVERPERLLASSMGISAAITMYPSLFTLKSSHQRKGSLMAPHVLKVHGSSWPAELIELCQMADAKLLKGEIEVPDTWNSGDIYLSSKTIKALQGTIGAIETGVDSIFKGPSAEHISNRAFVAIRPPGHHCHYGTPSGFCLLNNAHVAIEYAYDTYNVTHVVVLDFDLHHGDGTQDICWKRAGFKPEEEPEDSSYDDFGKKFAEFPKVGYFSMHDINSFPTESGFATKENIKNASTCIMNSHDLNIWNIHLSKWTTEEEFNVLYRTKYRTLFAKADEFFRSAKLEMNQQGRPFKGLVVISAGFDASEFEQTSMQRHSVNVPTSFYTTFTKDALKLAQMHCHGKVLSLMEGGYSDKAICSGVFAHLIGLQNQDWVKEWGSEQVVKEIVRGCKPAWKPYKTKRAKDVIRIWAEEVIRLGRAMIPEFDDIIFKDAVNSAPSNSLLKATVEPASTSTIAQRIIRSHRSNASPEKELHENKPRSTEKQEQREIRSDTKVKQLSSNNRAAETQIPFLQQEFSSEDEDEEYVYDEELNKTFNRTVEDITIDDISRHLETLEIEKKGDEDSDHELKEKNWKNSHQRRLQGNGMYKIPSNTKPHRIRQPQNANTPTYDDSDISMISHVSRKHTTRSGGRW.

The tract at residues 40–440 is histone deacetylase; that stretch reads AKAVVVLSPY…LIGLQNQDWV (401 aa). Residue His196 is part of the active site. The segment at 525 to 573 is disordered; it reads IRSHRSNASPEKELHENKPRSTEKQEQREIRSDTKVKQLSSNNRAAETQ. Over residues 534 to 560 the composition is skewed to basic and acidic residues; sequence PEKELHENKPRSTEKQEQREIRSDTKV. Positions 561–573 are enriched in polar residues; the sequence is KQLSSNNRAAETQ. A phosphoserine mark is found at Ser582, Ser583, Ser613, and Ser629. Over residues 625-638 the composition is skewed to basic and acidic residues; it reads GDEDSDHELKEKNW. The interval 625–697 is disordered; it reads GDEDSDHELK…KHTTRSGGRW (73 aa). Residues 665–674 show a composition bias toward polar residues; that stretch reads QPQNANTPTY.

It belongs to the histone deacetylase family. HD type 1 subfamily. Homodimer.

The protein localises to the nucleus. The catalysed reaction is N(6)-acetyl-L-lysyl-[histone] + H2O = L-lysyl-[histone] + acetate. In terms of biological role, responsible for the deacetylation of lysine residues on the N-terminal part of the core histones (H2A, H2B, H3 and H4). Histone deacetylation gives a tag for epigenetic repression and plays an important role in transcriptional regulation, cell cycle progression and developmental events. Histone deacetylases act via the formation of large multiprotein complexes. The sequence is that of Histone deacetylase HOS3 (HOS3) from Saccharomyces cerevisiae (strain ATCC 204508 / S288c) (Baker's yeast).